Here is a 351-residue protein sequence, read N- to C-terminus: UDP-3-O-acylglucosamine N-acyltransferase (351 aa).

Histidine 240 serves as the catalytic Proton acceptor.

The protein belongs to the transferase hexapeptide repeat family. LpxD subfamily. Homotrimer.

The enzyme catalyses a UDP-3-O-[(3R)-3-hydroxyacyl]-alpha-D-glucosamine + a (3R)-hydroxyacyl-[ACP] = a UDP-2-N,3-O-bis[(3R)-3-hydroxyacyl]-alpha-D-glucosamine + holo-[ACP] + H(+). Its pathway is bacterial outer membrane biogenesis; LPS lipid A biosynthesis. Catalyzes the N-acylation of UDP-3-O-acylglucosamine using 3-hydroxyacyl-ACP as the acyl donor. Is involved in the biosynthesis of lipid A, a phosphorylated glycolipid that anchors the lipopolysaccharide to the outer membrane of the cell. The polypeptide is UDP-3-O-acylglucosamine N-acyltransferase (Pseudomonas fluorescens (strain SBW25)).